The primary structure comprises 331 residues: Fructose-1,6-bisphosphatase class 1 (331 aa).

Glutamate 88, aspartate 108, leucine 110, and aspartate 111 together coordinate Mg(2+). Residues 111-114 (DGSS) and asparagine 201 each bind substrate. Mg(2+) is bound at residue glutamate 273.

This sequence belongs to the FBPase class 1 family. As to quaternary structure, homotetramer. Mg(2+) serves as cofactor.

It is found in the cytoplasm. It carries out the reaction beta-D-fructose 1,6-bisphosphate + H2O = beta-D-fructose 6-phosphate + phosphate. It participates in carbohydrate biosynthesis; gluconeogenesis. The sequence is that of Fructose-1,6-bisphosphatase class 1 from Methylobacillus flagellatus (strain ATCC 51484 / DSM 6875 / VKM B-1610 / KT).